Reading from the N-terminus, the 286-residue chain is Shikimate dehydrogenase (NADP(+)) (286 aa).

Shikimate contacts are provided by residues 22 to 24 (SLS) and Thr-69. The active-site Proton acceptor is Lys-73. Residue Glu-85 coordinates NADP(+). 2 residues coordinate shikimate: Asn-94 and Asp-109. Residues 133-137 (GAGGA) and Val-231 each bind NADP(+). Tyr-233 contacts shikimate. Gly-254 is a binding site for NADP(+).

Belongs to the shikimate dehydrogenase family. Homodimer.

The catalysed reaction is shikimate + NADP(+) = 3-dehydroshikimate + NADPH + H(+). Its pathway is metabolic intermediate biosynthesis; chorismate biosynthesis; chorismate from D-erythrose 4-phosphate and phosphoenolpyruvate: step 4/7. Involved in the biosynthesis of the chorismate, which leads to the biosynthesis of aromatic amino acids. Catalyzes the reversible NADPH linked reduction of 3-dehydroshikimate (DHSA) to yield shikimate (SA). This is Shikimate dehydrogenase (NADP(+)) from Alkaliphilus metalliredigens (strain QYMF).